Here is a 402-residue protein sequence, read N- to C-terminus: 1-deoxy-D-xylulose 5-phosphate reductoisomerase (402 aa).

Residues Thr27, Gly28, Ser29, Ile30, Gly53, Lys54, Asn55, and Asn140 each coordinate NADPH. Lys141 serves as a coordination point for 1-deoxy-D-xylulose 5-phosphate. Position 142 (Glu142) interacts with NADPH. Residue Asp166 participates in Mn(2+) binding. 1-deoxy-D-xylulose 5-phosphate contacts are provided by Ser167, Glu168, Ser192, and His215. Mn(2+) is bound at residue Glu168. Gly221 lines the NADPH pocket. 4 residues coordinate 1-deoxy-D-xylulose 5-phosphate: Ser228, Asn233, Lys234, and Glu237. Glu237 contacts Mn(2+).

Belongs to the DXR family. Mg(2+) is required as a cofactor. Mn(2+) serves as cofactor.

The enzyme catalyses 2-C-methyl-D-erythritol 4-phosphate + NADP(+) = 1-deoxy-D-xylulose 5-phosphate + NADPH + H(+). Its pathway is isoprenoid biosynthesis; isopentenyl diphosphate biosynthesis via DXP pathway; isopentenyl diphosphate from 1-deoxy-D-xylulose 5-phosphate: step 1/6. In terms of biological role, catalyzes the NADPH-dependent rearrangement and reduction of 1-deoxy-D-xylulose-5-phosphate (DXP) to 2-C-methyl-D-erythritol 4-phosphate (MEP). The chain is 1-deoxy-D-xylulose 5-phosphate reductoisomerase from Lawsonia intracellularis (strain PHE/MN1-00).